The following is a 384-amino-acid chain: DNA replication and repair protein RecF (384 aa).

30–37 (GENAQGKT) is an ATP binding site.

It belongs to the RecF family.

It is found in the cytoplasm. In terms of biological role, the RecF protein is involved in DNA metabolism; it is required for DNA replication and normal SOS inducibility. RecF binds preferentially to single-stranded, linear DNA. It also seems to bind ATP. This is DNA replication and repair protein RecF from Levilactobacillus brevis (strain ATCC 367 / BCRC 12310 / CIP 105137 / JCM 1170 / LMG 11437 / NCIMB 947 / NCTC 947) (Lactobacillus brevis).